The following is a 271-amino-acid chain: MASENMTPQDYIGHHLNNLQLDLRTFSLVDPHNPPATFWTLNIDSMFFSVVLGLLFLLMFRSVAKKATSGVPGKFQTAIELVIGFVHGSVKDMYHGKSKLIAPLALTIFVWVFLMNLMDLLPIDLLPYIGEHIFGLPALRVVPSADVNITLSMALGVFILILFYSIKMKGIGGFTKELTLQPFNHWAFIPVNLILEGVSLLSKPVSLGLRLFGNMYAGELIFILIAGLLPWWSQWILNVPWAIFHILIITLQAFIFMGLTIVYLSMASEEH.

A run of 5 helical transmembrane segments spans residues 38–58 (FWTL…LFLL), 100–120 (LIAP…LMDL), 146–166 (DVNI…FYSI), 220–240 (LIFI…LNVP), and 242–262 (AIFH…LTIV).

This sequence belongs to the ATPase A chain family. F-type ATPases have 2 components, CF(1) - the catalytic core - and CF(0) - the membrane proton channel. CF(1) has five subunits: alpha(3), beta(3), gamma(1), delta(1), epsilon(1). CF(0) has three main subunits: a(1), b(2) and c(9-12). The alpha and beta chains form an alternating ring which encloses part of the gamma chain. CF(1) is attached to CF(0) by a central stalk formed by the gamma and epsilon chains, while a peripheral stalk is formed by the delta and b chains.

It localises to the cell inner membrane. In terms of biological role, key component of the proton channel; it plays a direct role in the translocation of protons across the membrane. This is ATP synthase subunit a from Citrobacter koseri (strain ATCC BAA-895 / CDC 4225-83 / SGSC4696).